Reading from the N-terminus, the 201-residue chain is Prostamide/prostaglandin F synthase (201 aa).

This sequence belongs to the peroxiredoxin-like PRXL2 family. Prostamide/prostaglandin F synthase subfamily.

The protein resides in the cytoplasm. It is found in the cytosol. The catalysed reaction is prostaglandin H2 + [thioredoxin]-dithiol = prostaglandin F2alpha + [thioredoxin]-disulfide. The enzyme catalyses prostamide F2alpha + [thioredoxin]-disulfide = prostamide H2 + [thioredoxin]-dithiol. In terms of biological role, catalyzes the reduction of prostaglandin-ethanolamide H(2) (prostamide H(2)) to prostamide F(2alpha) with NADPH as proton donor. Also able to reduce prostaglandin H(2) to prostaglandin F(2alpha). The sequence is that of Prostamide/prostaglandin F synthase (prxl2b) from Xenopus laevis (African clawed frog).